We begin with the raw amino-acid sequence, 323 residues long: ATP synthase gamma chain (323 aa).

This sequence belongs to the ATPase gamma chain family. F-type ATPases have 2 components, CF(1) - the catalytic core - and CF(0) - the membrane proton channel. CF(1) has five subunits: alpha(3), beta(3), gamma(1), delta(1), epsilon(1). CF(0) has three main subunits: a, b and c.

Its subcellular location is the cell inner membrane. In terms of biological role, produces ATP from ADP in the presence of a proton gradient across the membrane. The gamma chain is believed to be important in regulating ATPase activity and the flow of protons through the CF(0) complex. The sequence is that of ATP synthase gamma chain from Rickettsia rickettsii (strain Iowa).